A 354-amino-acid polypeptide reads, in one-letter code: Holliday junction branch migration complex subunit RuvB (354 aa).

The large ATPase domain (RuvB-L) stretch occupies residues 5–197 (TDDFSAADLP…FGIVARLEFY (193 aa)). Residues leucine 36, arginine 37, glycine 78, lysine 81, threonine 82, threonine 83, 144–146 (EDY), arginine 187, tyrosine 197, and arginine 234 each bind ATP. Threonine 82 lines the Mg(2+) pocket. The interval 198–268 (TAEELGRIVR…IANKALAMLD (71 aa)) is small ATPAse domain (RuvB-S). The tract at residues 271–354 (PQGFDVMDRK…PPVSGNDMFT (84 aa)) is head domain (RuvB-H). DNA is bound by residues arginine 307, arginine 326, and arginine 331.

It belongs to the RuvB family. In terms of assembly, homohexamer. Forms an RuvA(8)-RuvB(12)-Holliday junction (HJ) complex. HJ DNA is sandwiched between 2 RuvA tetramers; dsDNA enters through RuvA and exits via RuvB. An RuvB hexamer assembles on each DNA strand where it exits the tetramer. Each RuvB hexamer is contacted by two RuvA subunits (via domain III) on 2 adjacent RuvB subunits; this complex drives branch migration. In the full resolvosome a probable DNA-RuvA(4)-RuvB(12)-RuvC(2) complex forms which resolves the HJ.

The protein resides in the cytoplasm. It carries out the reaction ATP + H2O = ADP + phosphate + H(+). Functionally, the RuvA-RuvB-RuvC complex processes Holliday junction (HJ) DNA during genetic recombination and DNA repair, while the RuvA-RuvB complex plays an important role in the rescue of blocked DNA replication forks via replication fork reversal (RFR). RuvA specifically binds to HJ cruciform DNA, conferring on it an open structure. The RuvB hexamer acts as an ATP-dependent pump, pulling dsDNA into and through the RuvAB complex. RuvB forms 2 homohexamers on either side of HJ DNA bound by 1 or 2 RuvA tetramers; 4 subunits per hexamer contact DNA at a time. Coordinated motions by a converter formed by DNA-disengaged RuvB subunits stimulates ATP hydrolysis and nucleotide exchange. Immobilization of the converter enables RuvB to convert the ATP-contained energy into a lever motion, pulling 2 nucleotides of DNA out of the RuvA tetramer per ATP hydrolyzed, thus driving DNA branch migration. The RuvB motors rotate together with the DNA substrate, which together with the progressing nucleotide cycle form the mechanistic basis for DNA recombination by continuous HJ branch migration. Branch migration allows RuvC to scan DNA until it finds its consensus sequence, where it cleaves and resolves cruciform DNA. This is Holliday junction branch migration complex subunit RuvB from Polaromonas sp. (strain JS666 / ATCC BAA-500).